The following is a 762-amino-acid chain: Probable disease resistance protein At1g61300 (762 aa).

Gly2 is lipidated: N-myristoyl glycine. S-palmitoyl cysteine attachment occurs at residues Cys3 and Cys4. The 304-residue stretch at 26–329 (NINRNSFGVE…CEGFIGEDQV (304 aa)) folds into the NB-ARC domain. 68 to 75 (GMGGVGKT) lines the ATP pocket. 5 LRR repeats span residues 401-422 (AVRR…SKCS), 423-444 (ELTT…FIRY), 447-470 (KLVV…SGLV), 471-493 (SLQF…KKLK), and 494-516 (KLTF…SRLL).

It belongs to the disease resistance NB-LRR family.

Its subcellular location is the cell membrane. Its function is as follows. Probable disease resistance protein. This Arabidopsis thaliana (Mouse-ear cress) protein is Probable disease resistance protein At1g61300.